A 280-amino-acid chain; its full sequence is Ribosomal RNA-processing protein 7 homolog A (280 aa).

The span at 1–10 shows a compositional bias: basic residues; sequence MVSRRKKRKA. Residues 1–24 are disordered; sequence MVSRRKKRKAGGHEESIPSPPGYS. Positions 59–159 constitute an RRM domain; the sequence is RTLFILNVPP…SGIHKWISDY (101 aa). S99 bears the Phosphoserine mark.

It belongs to the RRP7 family. In terms of assembly, part of the small subunit (SSU) processome, composed of more than 70 proteins and the RNA chaperone small nucleolar RNA (snoRNA) U3. Interacts with NOL6; required for NOL6 localization to nucleolus.

Its subcellular location is the nucleus. The protein localises to the nucleolus. It localises to the cell projection. The protein resides in the cilium. It is found in the cytoplasm. Its subcellular location is the cytoskeleton. The protein localises to the microtubule organizing center. It localises to the centrosome. Functionally, nucleolar protein that is involved in ribosomal RNA (rRNA) processing. Also plays a role in primary cilia resorption, and cell cycle progression in neurogenesis and neocortex development. Part of the small subunit (SSU) processome, first precursor of the small eukaryotic ribosomal subunit. During the assembly of the SSU processome in the nucleolus, many ribosome biogenesis factors, an RNA chaperone and ribosomal proteins associate with the nascent pre-rRNA and work in concert to generate RNA folding, modifications, rearrangements and cleavage as well as targeted degradation of pre-ribosomal RNA by the RNA exosome. The protein is Ribosomal RNA-processing protein 7 homolog A (Rrp7a) of Mus musculus (Mouse).